Consider the following 399-residue polypeptide: Argininosuccinate synthase (399 aa).

Position 9-17 (9-17) interacts with ATP; that stretch reads AYSGGLDTS. Y87 lines the L-citrulline pocket. Residue G117 coordinates ATP. L-aspartate-binding residues include T119, N123, and D124. Residue N123 coordinates L-citrulline. 5 residues coordinate L-citrulline: R127, S176, S185, E261, and Y273.

Belongs to the argininosuccinate synthase family. Type 1 subfamily. As to quaternary structure, homotetramer.

Its subcellular location is the cytoplasm. It carries out the reaction L-citrulline + L-aspartate + ATP = 2-(N(omega)-L-arginino)succinate + AMP + diphosphate + H(+). It participates in amino-acid biosynthesis; L-arginine biosynthesis; L-arginine from L-ornithine and carbamoyl phosphate: step 2/3. The sequence is that of Argininosuccinate synthase from Chlorobium chlorochromatii (strain CaD3).